The following is a 596-amino-acid chain: Selenocysteine-specific elongation factor (596 aa).

Residues 5 to 217 (RVNVNVGVLG…LLTSQISIPT (213 aa)) form the tr-type G domain. The G1 stretch occupies residues 14–21 (GHIDSGKT). GDP is bound by residues Gly-19, Thr-21, and Ala-22. GTP contacts are provided by Gly-19, Thr-21, and Ala-22. Mg(2+) is bound at residue Thr-21. Positions 46 to 50 (GITLD) are G2. Mg(2+) is bound by residues Thr-48 and Asp-92. The tract at residues 92–95 (DCPG) is G3. The interval 146 to 149 (NKID) is G4. Asp-149 and Lys-187 together coordinate GDP. Positions 149 and 187 each coordinate GTP. Residues 185–187 (AAK) form a G5 region. The residue at position 537 (Ser-537) is a Phosphoserine. At Thr-545 the chain carries Phosphothreonine. Residues 547–553 (ALKKRAR) carry the Nuclear localization signal motif. The tract at residues 548–573 (LKKRARAGRGEATRQEESAERSEPSQ) is disordered. Residues 555-571 (GRGEATRQEESAERSEP) are compositionally biased toward basic and acidic residues. The residue at position 556 (Arg-556) is an Omega-N-methylarginine.

The protein belongs to the TRAFAC class translation factor GTPase superfamily. Classic translation factor GTPase family. SelB subfamily. It depends on Mg(2+) as a cofactor. Requires Mn(2+) as cofactor.

It localises to the cytoplasm. Its subcellular location is the nucleus. The catalysed reaction is GTP + H2O = GDP + phosphate + H(+). In terms of biological role, translation factor required for the incorporation of the rare amino acid selenocysteine encoded by UGA codons. Replaces the eRF1-eRF3-GTP ternary complex for the insertion of selenocysteine directed by the UGA codon. Insertion of selenocysteine at UGA codons is mediated by SECISBP2 and EEFSEC: SECISBP2 (1) specifically binds the SECIS sequence once the 80S ribosome encounters an in-frame UGA codon and (2) contacts the RPS27A/eS31 of the 40S ribosome before ribosome stalling. (3) GTP-bound EEFSEC then delivers selenocysteinyl-tRNA(Sec) to the 80S ribosome and adopts a preaccommodated state conformation. (4) After GTP hydrolysis, EEFSEC dissociates from the assembly, selenocysteinyl-tRNA(Sec) accommodates, and peptide bond synthesis and selenoprotein elongation occur. The chain is Selenocysteine-specific elongation factor from Homo sapiens (Human).